The chain runs to 126 residues: Diadenosine hexaphosphate hydrolase (126 aa).

In terms of domain architecture, Nudix hydrolase spans 1-121 (MELGAGGVVF…EDLGLLEVAL (121 aa)). Substrate contacts are provided by residues 21-23 (DRM) and 30-32 (KGH). Positions 31 to 52 (GHPEPGESLEEAAVREVWEETG) match the Nudix box motif. Mg(2+) is bound by residues Glu46 and Glu50. Residues 66–68 (YVN), Arg74, and Glu112 each bind substrate.

This sequence belongs to the Nudix hydrolase family. Monomer. Requires Mg(2+) as cofactor.

It catalyses the reaction P(1),P(6)-bis(5'-adenosyl) hexaphosphate + H2O = 2 ATP + 2 H(+). It carries out the reaction P(1),P(5)-bis(5'-adenosyl) pentaphosphate + H2O = ADP + ATP + 2 H(+). The catalysed reaction is P(1),P(4)-bis(5'-adenosyl) tetraphosphate + H2O = AMP + ATP + 2 H(+). Its activity is regulated as follows. Strongly inhibited by fluoride ions. In terms of biological role, specifically hydrolyzes (di)adenosine polyphosphates but not ATP or diadenosine triphosphate, generating ATP as the product. Diadenosine hexaphosphate (Ap6A) is the preferred substrate and hydrolysis yields 2 ATP. It is the only enzyme that symmetrically hydrolyzes Ap6A. It also hydrolyzes diadenosine pentaphosphate (Ap5A), diadenosine tetraphosphate (Ap4A) and adenosine tetraphosphate (p4A). This chain is Diadenosine hexaphosphate hydrolase, found in Thermus thermophilus.